Reading from the N-terminus, the 238-residue chain is Fish-egg lectin (238 aa).

5 consecutive repeat copies span residues 1–34 (LDCT…VLID), 35–68 (NVFT…KYQS), 69–106 (GGFV…MDAN), 107–156 (NKWP…CSGS), and 157–199 (GSFI…KPDG). Positions 1–199 (LDCTVIDGNL…TGVTRSKPDG (199 aa)) are 5 X approximate tandem repeats. 4 disulfide bridges follow: Cys-3-Cys-234, Cys-100-Cys-153, Cys-128-Cys-133, and Cys-208-Cys-226. A glycan (N-linked (GlcNAc...) asparagine) is linked at Asn-27.

Belongs to the tectonin family. As to expression, expressed in the eggs.

The protein localises to the secreted. In terms of biological role, lipopolysaccharide-binding protein with a very low agglutinating activity for human A-type erythrocytes and interacts with both Gram-positive and Gram-negative bacteria. The polypeptide is Fish-egg lectin (Cyprinus carpio (Common carp)).